The chain runs to 373 residues: MNTFGDNFRVTTWGESHGKALGAVIDGCPANLPILEEDIQNELNRRRPGYSIFSTPRKEEDMLEILSGIFEGKTTGTPISGLVFNKGQKSKDYSKIKDTPRPGHADLNYFLKYGNYDYRGGGRSSGRTTIGNVIGGAVAKKLIEFTHNIKIIGYSTKIGKINGDFDYYKNPEFFESDSNIEKLFEKTENNPLRCPSKNSDEMKDYVLDAMDKKDSVGGIIEIIIKGIPQGVGNPVFNKLEGKLGSAFIGINAVKGFEIGRGFESSDLYGSEMNDEYYIDENSINEKTNNAGGIIGGISTGSPVVLRVSIKPTPSISKIQDSVNLISNENEKIEIGGRHDPIIVPRVIPVLESMAAITVADLMISGGYINPCRL.

NADP(+) is bound at residue arginine 46. Residues 123–125 (RSS), 251–252 (NA), glycine 295, 310–314 (KPTPS), and arginine 337 each bind FMN.

Belongs to the chorismate synthase family. Requires FMNH2 as cofactor.

The enzyme catalyses 5-O-(1-carboxyvinyl)-3-phosphoshikimate = chorismate + phosphate. Its pathway is metabolic intermediate biosynthesis; chorismate biosynthesis; chorismate from D-erythrose 4-phosphate and phosphoenolpyruvate: step 7/7. Catalyzes the anti-1,4-elimination of the C-3 phosphate and the C-6 proR hydrogen from 5-enolpyruvylshikimate-3-phosphate (EPSP) to yield chorismate, which is the branch point compound that serves as the starting substrate for the three terminal pathways of aromatic amino acid biosynthesis. This reaction introduces a second double bond into the aromatic ring system. This is Chorismate synthase from Methanococcus maripaludis (strain DSM 14266 / JCM 13030 / NBRC 101832 / S2 / LL).